The following is a 444-amino-acid chain: Glutamate--methylamine ligase (444 aa).

Residues His14–Lys97 enclose the GS beta-grasp domain. One can recognise a GS catalytic domain in the interval Thr103 to Tyr444.

It belongs to the glutamine synthetase family. Type 3 subfamily. Requires Mg(2+) as cofactor.

The enzyme catalyses methylamine + L-glutamate + ATP = N(5)-methyl-L-glutamine + ADP + phosphate + H(+). The catalysed reaction is ethylamine + L-glutamate + ATP = N(5)-ethyl-L-glutamine + ADP + phosphate + H(+). Its activity is regulated as follows. Formation of theanine is repressed by a high concentration of glutamic acid. Its function is as follows. Catalyzes the formation of N(5)-methyl-L-glutamine from glutamate and methylamine. In vitro, can also use ethylamine, hydroxylamine and ammonia, with 75%, 40% and 1% activity compared to methylamine, respectively. This chain is Glutamate--methylamine ligase, found in Methylovorus mays.